A 196-amino-acid polypeptide reads, in one-letter code: Holliday junction branch migration complex subunit RuvA (196 aa).

Residues 1 to 63 (MYEYFKGIIS…EDAELLYGFA (63 aa)) are domain I. The tract at residues 64–142 (TEEEKQLFLS…AAGSPAESKA (79 aa)) is domain II. The tract at residues 143 to 146 (PVQT) is flexible linker. A domain III region spans residues 147–196 (ADNQELEEAMEAMLALGYKAAELKKIKKFFEGTTDTAENYIKSALKMLVK).

Belongs to the RuvA family. As to quaternary structure, homotetramer. Forms an RuvA(8)-RuvB(12)-Holliday junction (HJ) complex. HJ DNA is sandwiched between 2 RuvA tetramers; dsDNA enters through RuvA and exits via RuvB. An RuvB hexamer assembles on each DNA strand where it exits the tetramer. Each RuvB hexamer is contacted by two RuvA subunits (via domain III) on 2 adjacent RuvB subunits; this complex drives branch migration. In the full resolvosome a probable DNA-RuvA(4)-RuvB(12)-RuvC(2) complex forms which resolves the HJ.

Its subcellular location is the cytoplasm. Its function is as follows. The RuvA-RuvB-RuvC complex processes Holliday junction (HJ) DNA during genetic recombination and DNA repair, while the RuvA-RuvB complex plays an important role in the rescue of blocked DNA replication forks via replication fork reversal (RFR). RuvA specifically binds to HJ cruciform DNA, conferring on it an open structure. The RuvB hexamer acts as an ATP-dependent pump, pulling dsDNA into and through the RuvAB complex. HJ branch migration allows RuvC to scan DNA until it finds its consensus sequence, where it cleaves and resolves the cruciform DNA. This chain is Holliday junction branch migration complex subunit RuvA, found in Streptococcus sanguinis (strain SK36).